The chain runs to 118 residues: Small ribosomal subunit protein uS17 (118 aa).

This sequence belongs to the universal ribosomal protein uS17 family. In terms of assembly, part of the 30S ribosomal subunit.

In terms of biological role, one of the primary rRNA binding proteins, it binds specifically to the 5'-end of 16S ribosomal RNA. The chain is Small ribosomal subunit protein uS17 from Methanopyrus kandleri (strain AV19 / DSM 6324 / JCM 9639 / NBRC 100938).